The sequence spans 468 residues: Na(+)/H(+) antiporter NhaA (468 aa).

The next 10 membrane-spanning stretches (helical) occupy residues 32-52 (FLHI…IALL), 83-103 (LHFW…GMEI), 119-139 (ALPM…YLAI), 148-168 (GWAV…ALLG), 178-198 (FLLA…AVAF), 205-225 (GGFL…WIGV), 320-340 (ALHP…NAGV), 354-374 (GAMF…IVSV), 397-417 (LVGL…TLAF), and 428-448 (LGVL…GFIY).

The protein belongs to the NhaA Na(+)/H(+) (TC 2.A.33) antiporter family.

It localises to the cell inner membrane. The catalysed reaction is Na(+)(in) + 2 H(+)(out) = Na(+)(out) + 2 H(+)(in). In terms of biological role, na(+)/H(+) antiporter that extrudes sodium in exchange for external protons. This Cupriavidus necator (strain ATCC 17699 / DSM 428 / KCTC 22496 / NCIMB 10442 / H16 / Stanier 337) (Ralstonia eutropha) protein is Na(+)/H(+) antiporter NhaA.